The sequence spans 746 residues: Probably inactive copalyl diphosphate synthase 3 (746 aa).

The short motif at 331–334 (DVND) is the DXDD motif; degenerated element.

The protein belongs to the terpene synthase family. Tpsc subfamily. As to expression, mostly expressed in stems, and, at low levels, in roots and leaves, but barely in flowers.

This chain is Probably inactive copalyl diphosphate synthase 3, found in Isodon rubescens (Rabdosia rubescens).